The following is a 649-amino-acid chain: Mitochondrial Rho GTPase 1 (649 aa).

Residues 1-623 (MTKETIRVVI…KPTNIDYSSA (623 aa)) are Cytoplasmic-facing. Residues 3–176 (KETIRVVICG…FYLCQRSISY (174 aa)) enclose the Miro 1 domain. Residues 12–19 (GDDGVGKT), 61–63 (DTD), and 115–118 (NKCD) contribute to the GTP site. EF-hand domains are found at residues 192–227 (SAVAALSRIFFLSDEDQDGFLNDNEIMDLQRKCFGK) and 320–355 (KGYRFLVDIFIKFDSDNDGALNDTELHTLFRSTPGL). Positions 205, 207, 209, 216, 333, 335, 337, and 344 each coordinate Ca(2+). Residues 436-601 (RKVFNCFVVG…FKKIIQASLE (166 aa)) form the Miro 2 domain. GTP-binding positions include 445-452 (GKRNSGKS), 481-485 (EVTGD), and 550-553 (LKAD). The chain crosses the membrane as a helical; Anchor for type IV membrane protein span at residues 624 to 644 (VILGSSIGFLALFSYTMIKLL). At 645–649 (KPTQQ) the chain is on the mitochondrial intermembrane side.

Belongs to the mitochondrial Rho GTPase family.

The protein localises to the mitochondrion outer membrane. Mitochondrial GTPase involved in mitochondrial trafficking. Probably involved in control of anterograde transport of mitochondria and their subcellular distribution. The protein is Mitochondrial Rho GTPase 1 (GEM1) of Candida glabrata (strain ATCC 2001 / BCRC 20586 / JCM 3761 / NBRC 0622 / NRRL Y-65 / CBS 138) (Yeast).